The following is a 238-amino-acid chain: Uridylate kinase (238 aa).

An ATP-binding site is contributed by Lys-12–Gly-15. Residue Gly-54 coordinates UMP. Residues Gly-55 and Arg-59 each coordinate ATP. UMP-binding positions include Asp-74 and Thr-135 to Thr-142. Positions 162, 163, 168, and 171 each coordinate ATP.

The protein belongs to the UMP kinase family. As to quaternary structure, homohexamer.

Its subcellular location is the cytoplasm. It catalyses the reaction UMP + ATP = UDP + ADP. The protein operates within pyrimidine metabolism; CTP biosynthesis via de novo pathway; UDP from UMP (UMPK route): step 1/1. Inhibited by UTP. Functionally, catalyzes the reversible phosphorylation of UMP to UDP. The sequence is that of Uridylate kinase from Bradyrhizobium sp. (strain ORS 278).